The following is a 37-amino-acid chain: ALTCSDVSNKISPCLSYLKQGGEVPADCCAGVKGLND.

The protein belongs to the plant LTP family.

Functionally, plant non-specific lipid-transfer proteins transfer phospholipids as well as galactolipids across membranes. May play a role in wax or cutin deposition in the cell walls of expanding epidermal cells and certain secretory tissues. The chain is Non-specific lipid-transfer protein from Artemisia vulgaris (Mugwort).